A 459-amino-acid chain; its full sequence is MKETIVHMGFDDIDTPFGGCTTHFVASILVKWVKDRRIKLIDYPNLIRLNPGVPWKTRGNGAVVLRFKVKNYDEAIKLLEEAYDEALEYLGKYHHPQHHPVIGMYIGGLSERIKWIGWKAVHDLIPLDLMHRVLEKEKNKIIYKLLRKDKKRGLIGVFSAIGYRMTNTDYTYELIAYRSEEYIDKPRQVNAESVKYMDKVFHNDTILNYDYETNRPLITPHGGDPVLLGIRGEYPDVLIKAYNMVKINEPVPIRLIYRTNQHTDAHLRRINNLGEAFIYRGVRVRVWVASIPKRIMGGHVIFKVTDGRRFIDVAAYEPTGKLRRIAEKLRPGDEVEVMGIVRPQSSKHGPTINLEKLHIIMVKPLIKLENPRCPRCGARMKSAGRGKGYKCPKCGYRDPNAKKIVRVIKRDLEPGWYEPSPRAFKHLMKPLKRFGKEKNHYPEEIEPSNFIWYNNMLLK.

Positions 282-360 (VRVRVWVASI…TINLEKLHII (79 aa)) form a DNA-binding region, OB.

It belongs to the TiaS family.

Its subcellular location is the cytoplasm. It catalyses the reaction cytidine(34) in tRNA(Ile2) + agmatine + ATP + H2O = 2-agmatinylcytidine(34) in tRNA(Ile2) + AMP + 2 phosphate + 2 H(+). In terms of biological role, ATP-dependent agmatine transferase that catalyzes the formation of 2-agmatinylcytidine (agm2C) at the wobble position (C34) of tRNA(Ile2), converting the codon specificity from AUG to AUA. This Staphylothermus marinus (strain ATCC 43588 / DSM 3639 / JCM 9404 / F1) protein is tRNA(Ile2) 2-agmatinylcytidine synthetase TiaS.